We begin with the raw amino-acid sequence, 423 residues long: Histidine--tRNA ligase (423 aa).

This sequence belongs to the class-II aminoacyl-tRNA synthetase family. Homodimer.

It localises to the cytoplasm. The catalysed reaction is tRNA(His) + L-histidine + ATP = L-histidyl-tRNA(His) + AMP + diphosphate + H(+). This chain is Histidine--tRNA ligase, found in Actinobacillus succinogenes (strain ATCC 55618 / DSM 22257 / CCUG 43843 / 130Z).